The primary structure comprises 278 residues: Ribosomal RNA small subunit methyltransferase A (278 aa).

6 residues coordinate S-adenosyl-L-methionine: N18, L20, G45, E66, D89, and N110.

It belongs to the class I-like SAM-binding methyltransferase superfamily. rRNA adenine N(6)-methyltransferase family. RsmA subfamily.

The protein resides in the cytoplasm. It carries out the reaction adenosine(1518)/adenosine(1519) in 16S rRNA + 4 S-adenosyl-L-methionine = N(6)-dimethyladenosine(1518)/N(6)-dimethyladenosine(1519) in 16S rRNA + 4 S-adenosyl-L-homocysteine + 4 H(+). Specifically dimethylates two adjacent adenosines (A1518 and A1519) in the loop of a conserved hairpin near the 3'-end of 16S rRNA in the 30S particle. May play a critical role in biogenesis of 30S subunits. In Cupriavidus pinatubonensis (strain JMP 134 / LMG 1197) (Cupriavidus necator (strain JMP 134)), this protein is Ribosomal RNA small subunit methyltransferase A.